The sequence spans 59 residues: Arabinogalactan protein 13 (59 aa).

Positions 1-27 (MEAMKMRLFVAVLVAAMAFSAVQQAAA) are cleaved as a signal peptide. 4-hydroxyproline is present on residues proline 31, proline 33, and proline 35. Proline 31, proline 33, and proline 35 each carry an O-linked (Ara...) hydroxyproline glycan. The GPI-anchor amidated serine moiety is linked to residue serine 37. The propeptide at 38 to 59 (DASLAIPAFFASVATLAFGFLF) is removed in mature form.

It belongs to the AG-peptide AGP family. In terms of processing, contains 4-hydroxyproline; hydroxylated on Pro-31, Pro-33 and Pro-35. Post-translationally, O-glycosylated on hydroxyprolines; noncontiguous hydroxylproline residues are glycosylated with arabinogalactan.

It localises to the cell membrane. Its function is as follows. Proteoglycan that seems to be implicated in diverse developmental roles such as differentiation, cell-cell recognition, embryogenesis and programmed cell death. The sequence is that of Arabinogalactan protein 13 from Arabidopsis thaliana (Mouse-ear cress).